We begin with the raw amino-acid sequence, 55 residues long: Spermatid nuclear transition protein 1 (55 aa).

The segment covering 1–42 has biased composition (basic residues); the sequence is MSTSRKLKSHGMRRSKSRSPHKGVKRGGSKRKYRKGNLKSRK. The interval 1-55 is disordered; the sequence is MSTSRKLKSHGMRRSKSRSPHKGVKRGGSKRKYRKGNLKSRKRGDDANRNYRSHL. Ser-9 and Ser-40 each carry phosphoserine.

The protein belongs to the nuclear transition protein 1 family. As to expression, expressed by spermatids (at protein level).

The protein resides in the nucleus. It localises to the chromosome. Plays a key role in the replacement of histones to protamine in the elongating spermatids of mammals. In condensing spermatids, loaded onto the nucleosomes, where it promotes the recruitment and processing of protamines, which are responsible for histone eviction. The chain is Spermatid nuclear transition protein 1 (TNP1) from Homo sapiens (Human).